A 671-amino-acid polypeptide reads, in one-letter code: DNA ligase (671 aa).

Residues 32 to 36, 81 to 82, and E113 contribute to the NAD(+) site; these read DAEYD and SL. K115 serves as the catalytic N6-AMP-lysine intermediate. NAD(+) is bound by residues R136, E173, K290, and K314. Zn(2+)-binding residues include C408, C411, C426, and C432. A BRCT domain is found at 593–671; it reads EIDSPFAGKT…EAEMIRLLGA (79 aa).

The protein belongs to the NAD-dependent DNA ligase family. LigA subfamily. Requires Mg(2+) as cofactor. Mn(2+) is required as a cofactor.

It carries out the reaction NAD(+) + (deoxyribonucleotide)n-3'-hydroxyl + 5'-phospho-(deoxyribonucleotide)m = (deoxyribonucleotide)n+m + AMP + beta-nicotinamide D-nucleotide.. DNA ligase that catalyzes the formation of phosphodiester linkages between 5'-phosphoryl and 3'-hydroxyl groups in double-stranded DNA using NAD as a coenzyme and as the energy source for the reaction. It is essential for DNA replication and repair of damaged DNA. The protein is DNA ligase of Salmonella paratyphi C (strain RKS4594).